The following is a 246-amino-acid chain: Probable phosphatase Ssed_2939 (246 aa).

Residues H8, H10, H16, H41, E74, H102, H132, D193, and H195 each coordinate Zn(2+).

Belongs to the PHP family. Zn(2+) is required as a cofactor.

The sequence is that of Probable phosphatase Ssed_2939 from Shewanella sediminis (strain HAW-EB3).